We begin with the raw amino-acid sequence, 792 residues long: Kinesin-like protein KIFC2 (792 aa).

2 disordered regions span residues 22 to 45 and 142 to 184; these read AAAV…RRRP and QGTQ…QEHQ. The span at 142–169 shows a compositional bias: polar residues; the sequence is QGTQPTCPVQPSTLDGSLSQEESSSQPT. A coiled-coil region spans residues 186-347; that stretch reads LQLEEEQRVW…ARMASLRQGC (162 aa). One can recognise a Kinesin motor domain in the interval 409–732; that stretch reads NIRVLCRLRP…LKFAERVGQV (324 aa). Residue 486–493 participates in ATP binding; that stretch reads GQTGTGKT. The segment at 734-792 is disordered; it reads LGPARRRRAPRSGTPSSLSTDTPLTGTSCTPTPSPGSPPSTSPNSCSGLTLEPPGDPPP. Positions 744–764 are enriched in low complexity; that stretch reads RSGTPSSLSTDTPLTGTSCTP. The span at 765-774 shows a compositional bias: pro residues; that stretch reads TPSPGSPPST.

It belongs to the TRAFAC class myosin-kinesin ATPase superfamily. Kinesin family. As to expression, present in axons and dendrites of neurons in the central and peripheral nervous systems.

It localises to the cytoplasm. The protein resides in the cytoskeleton. In terms of biological role, may play a role in microtubule-dependent retrograde axonal transport. May function as the motor for the transport of multivesicular body (MVB)-like organelles in dendrites. This is Kinesin-like protein KIFC2 (Kifc2) from Mus musculus (Mouse).